The primary structure comprises 148 residues: Urease accessory protein UreE (148 aa).

This sequence belongs to the UreE family.

Its subcellular location is the cytoplasm. In terms of biological role, involved in urease metallocenter assembly. Binds nickel. Probably functions as a nickel donor during metallocenter assembly. The protein is Urease accessory protein UreE of Nostoc punctiforme (strain ATCC 29133 / PCC 73102).